We begin with the raw amino-acid sequence, 524 residues long: Glutamyl-tRNA(Gln) amidotransferase subunit A, mitochondrial (524 aa).

K76 (charge relay system) is an active-site residue. Positions 146–168 (KQYRGKGSPDSSQEDQEPQWLVA) are disordered. The Charge relay system role is filled by S171. The Acyl-ester intermediate role is filled by S195.

It belongs to the amidase family. GatA subfamily. As to quaternary structure, subunit of the heterotrimeric GatCAB amidotransferase (AdT) complex, composed of A (QRSL1), B (GATB) and C (GATC) subunits.

It is found in the mitochondrion. It carries out the reaction L-glutamyl-tRNA(Gln) + L-glutamine + ATP + H2O = L-glutaminyl-tRNA(Gln) + L-glutamate + ADP + phosphate + H(+). Its function is as follows. Allows the formation of correctly charged Gln-tRNA(Gln) through the transamidation of misacylated Glu-tRNA(Gln) in the mitochondria. The reaction takes place in the presence of glutamine and ATP through an activated gamma-phospho-Glu-tRNA(Gln). This chain is Glutamyl-tRNA(Gln) amidotransferase subunit A, mitochondrial, found in Ornithorhynchus anatinus (Duckbill platypus).